A 469-amino-acid polypeptide reads, in one-letter code: Sorting and assembly machinery component 50 homolog (469 aa).

The tract at residues 1 to 20 (MGTVHARSLEPLPSSGPDFG) is disordered. Residues 45–125 (VVVQHVHFDG…LDVTFEVTEL (81 aa)) form the POTRA domain. Lys255 carries the N6-methyllysine modification.

Belongs to the SAM50/omp85 family. Associates with the mitochondrial contact site and cristae organizing system (MICOS) complex, composed of at least MICOS10/MIC10, CHCHD3/MIC19, CHCHD6/MIC25, APOOL/MIC27, IMMT/MIC60, APOO/MIC23/MIC26 and QIL1/MIC13. This complex was also known under the names MINOS or MitOS complex. The MICOS complex associates with mitochondrial outer membrane proteins SAMM50, MTX1 and MTX2 (together described as components of the mitochondrial outer membrane sorting assembly machinery (SAM) complex) and DNAJC11, mitochondrial inner membrane protein TMEM11 and with HSPA9. The MICOS and SAM complexes together with DNAJC11 are part of a large protein complex spanning both membranes termed the mitochondrial intermembrane space bridging (MIB) complex. Interacts with CHCHD3/MIC19. Interacts with ARMC1. As to quaternary structure, (Microbial infection) Interacts with parasite T.gondii RH strain MAF1b1; the interaction is probably indirect and results in the disruption of the MIB complex and the formation of SPOTs (structures positive for outer mitochondrial membrane (OMM)), a cellular response to OMM stress, which leads to the constitutive shedding of OMM vesicles.

It localises to the mitochondrion outer membrane. Its subcellular location is the cytoplasm. The protein resides in the mitochondrion. In terms of biological role, plays a crucial role in the maintenance of the structure of mitochondrial cristae and the proper assembly of the mitochondrial respiratory chain complexes. Required for the assembly of TOMM40 into the TOM complex. The sequence is that of Sorting and assembly machinery component 50 homolog (SAMM50) from Homo sapiens (Human).